We begin with the raw amino-acid sequence, 97 residues long: Eotaxin (97 aa).

The first 23 residues, 1 to 23, serve as a signal peptide directing secretion; the sequence is MQSSTALLFLLLTVTSFTSQVLA. Cystine bridges form between Cys-32/Cys-57 and Cys-33/Cys-73. O-linked (GalNAc...) threonine glycosylation occurs at Thr-94.

This sequence belongs to the intercrine beta (chemokine CC) family. As to expression, expressed constitutively in the thymus. Expression inducible in the lung (type I alveolar epithelial cells), intestine, heart, spleen, kidney.

The protein resides in the secreted. Functionally, in response to the presence of allergens, this protein directly promotes the accumulation of eosinophils (a prominent feature of allergic inflammatory reactions), but not lymphocytes, macrophages or neutrophils. Binds to CCR3. This is Eotaxin (Ccl11) from Mus musculus (Mouse).